An 84-amino-acid chain; its full sequence is U8-theraphotoxin-Hhn1b (84 aa).

An N-terminal signal peptide occupies residues 1 to 21 (MKVVLIVCLVWVMAMMELVSC). Intrachain disulfides connect C23/C35, C29/C44, C34/C67, and C54/C75.

This sequence belongs to the AVIT (prokineticin) family. As to expression, expressed by the venom gland.

Its subcellular location is the secreted. The sequence is that of U8-theraphotoxin-Hhn1b from Cyriopagopus hainanus (Chinese bird spider).